Consider the following 157-residue polypeptide: uncharacterized protein (157 aa).

The HD domain maps to 33-134 (NLKHFLDVAR…MYRADKLSRL (102 aa)).

This is an uncharacterized protein from Clostridium beijerinckii (strain ATCC 51743 / NCIMB 8052) (Clostridium acetobutylicum).